Consider the following 569-residue polypeptide: AP-4 complex accessory subunit Tepsin (569 aa).

The ENTH domain occupies 8–141 (RDRLSFLHRL…FSDALPQPPS (134 aa)). The disordered stretch occupies residues 196-298 (VRPGPDNPCT…SGASREPGDL (103 aa)). Over residues 219–229 (VTPSASHTHPN) the composition is skewed to polar residues. Over residues 260 to 292 (SSPSSQNSSCTSNLSRASDSVSRSGSDSHSGAS) the composition is skewed to low complexity. S400 carries the phosphoserine modification. The interval 467–524 (VPRSPVPTPSPDTLPPALQDPGELRTQLVCSSEPGTGSEQRLENTDTPKDSSSPCPWS) is disordered. Positions 470–480 (SPVPTPSPDTL) are enriched in pro residues. A compositionally biased stretch (polar residues) spans 494–505 (LVCSSEPGTGSE). A compositionally biased stretch (basic and acidic residues) spans 506–515 (QRLENTDTPK). Residues 525–535 (PNSLFAGMELV) are interaction with AP4B1. The interval 559–569 (SEPSAFAFLNM) is interaction with AP4E1.

Interacts with AP4B1 and AP4E1; the interaction is direct and mediates the association of TEPSIN with the adapter-like complex 4 (AP-4), a heterotetramer composed of AP4B1, AP4E1, AP4M1 and AP4S1.

It is found in the golgi apparatus. The protein localises to the trans-Golgi network membrane. Its subcellular location is the cytoplasmic vesicle. The protein resides in the cytoplasm. It localises to the cytosol. In terms of biological role, associates with the adapter-like complex 4 (AP-4) and may therefore play a role in vesicular trafficking of proteins at the trans-Golgi network. This is AP-4 complex accessory subunit Tepsin from Rattus norvegicus (Rat).